We begin with the raw amino-acid sequence, 98 residues long: NADH-ubiquinone oxidoreductase chain 4L (98 aa).

The next 3 membrane-spanning stretches (helical) occupy residues 1–21 (MPFI…GLLM), 29–49 (SLLC…LLCL), and 61–81 (MILL…LVMV).

It belongs to the complex I subunit 4L family. In terms of assembly, core subunit of respiratory chain NADH dehydrogenase (Complex I) which is composed of 45 different subunits.

The protein resides in the mitochondrion inner membrane. The catalysed reaction is a ubiquinone + NADH + 5 H(+)(in) = a ubiquinol + NAD(+) + 4 H(+)(out). Functionally, core subunit of the mitochondrial membrane respiratory chain NADH dehydrogenase (Complex I) which catalyzes electron transfer from NADH through the respiratory chain, using ubiquinone as an electron acceptor. Part of the enzyme membrane arm which is embedded in the lipid bilayer and involved in proton translocation. The sequence is that of NADH-ubiquinone oxidoreductase chain 4L (MT-ND4L) from Dugong dugon (Dugong).